Here is a 1320-residue protein sequence, read N- to C-terminus: Probable inactive ATP-dependent zinc metalloprotease FTSHI 5, chloroplastic (1320 aa).

A chloroplast-targeting transit peptide spans 1–43 (MDFISASSLSSPFSTQLSPIYLSSGIVSLKPRHRVKNRNFGSR). 3 helical membrane passes run 571–591 (LYLK…WIPM), 633–653 (NIND…IIPY), and 695–715 (FQWF…LYHV). 824-831 (GERGTGKT) is a binding site for ATP.

This sequence in the N-terminal section; belongs to the AAA ATPase family. It in the C-terminal section; belongs to the peptidase M41 family. Oligomer.

The protein localises to the plastid. Its subcellular location is the chloroplast membrane. In terms of biological role, required for plastid development during embryogenesis. Might be involved in chaperone functions or play a structural role in the thylakoid FtsH complex. This is Probable inactive ATP-dependent zinc metalloprotease FTSHI 5, chloroplastic from Arabidopsis thaliana (Mouse-ear cress).